A 408-amino-acid chain; its full sequence is Peptidase T (408 aa).

Zn(2+) is bound at residue His-78. Asp-80 is a catalytic residue. Residue Asp-140 coordinates Zn(2+). Residue Glu-174 is the Proton acceptor of the active site. Residues Glu-175, Asp-197, and His-379 each contribute to the Zn(2+) site.

This sequence belongs to the peptidase M20B family. The cofactor is Zn(2+).

Its subcellular location is the cytoplasm. The catalysed reaction is Release of the N-terminal residue from a tripeptide.. In terms of biological role, cleaves the N-terminal amino acid of tripeptides. This is Peptidase T from Staphylococcus aureus (strain MRSA252).